Consider the following 185-residue polypeptide: Putative manganese efflux pump MntP (185 aa).

The next 6 helical transmembrane spans lie at 8 to 28 (LFVI…SIGL), 42 to 62 (ISFG…GVLF), 66 to 86 (ILVI…ILML), 103 to 123 (MYFI…FTVL), 137 to 157 (IFIG…SGYL), and 165 to 185 (KYAN…MIFM).

Belongs to the MntP (TC 9.B.29) family.

It localises to the cell membrane. Its function is as follows. Probably functions as a manganese efflux pump. This chain is Putative manganese efflux pump MntP, found in Clostridium novyi (strain NT).